The chain runs to 100 residues: MAKKSMIEREKKRQRLVIKYAQKRQQLKTELKTTSFLEQKVNLNRKLQQLPRNSFPVRLHNRCLITGRPKGYLRDFGLSRHVLREMAHECLLPGVTKSSW.

Belongs to the universal ribosomal protein uS14 family. Part of the 30S ribosomal subunit.

The protein localises to the plastid. The protein resides in the chloroplast. Its function is as follows. Binds 16S rRNA, required for the assembly of 30S particles. The sequence is that of Small ribosomal subunit protein uS14c from Pleurastrum terricola (Filamentous green alga).